The chain runs to 507 residues: Subtilisin-like protease 1 (507 aa).

The signal sequence occupies residues 1–19; that stretch reads MGVFRFISISLAAVSAANA. A propeptide spanning residues 20-116 is cleaved from the precursor; sequence AQILSMPHAQ…VEPDTIISVN (97 aa). An Inhibitor I9 domain is found at 34–113; sequence SYIVMMKDDT…VMFVEPDTII (80 aa). One can recognise a Peptidase S8 domain in the interval 126–400; the sequence is SWGLARISNS…NVLISNGGAK (275 aa). Catalysis depends on charge relay system residues aspartate 158 and histidine 190. Residues 175 to 198 form a disordered region; that stretch reads GSNQVNDGDDRDGSGHGTHTSGTM. N-linked (GlcNAc...) asparagine glycosylation occurs at asparagine 251. The segment covering 282–294 has biased composition (polar residues); that stretch reads NENQDARSSSPAS. The interval 282–312 is disordered; sequence NENQDARSSSPASEPSVCTVGSSAEDDSRSS. The active-site Charge relay system is the serine 345. Positions 378 to 394 are enriched in polar residues; it reads SSSITDVGPGTPTNVLI. The disordered stretch occupies residues 378-486; that stretch reads SSSITDVGPG…YPGGDNFDFD (109 aa). Composition is skewed to pro residues over residues 405-428 and 438-449; these read KPAPGPSPNPSQPSEPQQPAPSQP and EPFPGEPFPGEP. A compositionally biased stretch (low complexity) spans 450 to 461; that stretch reads FPGESSPGESAP. Pro residues predominate over residues 462-476; sequence APAPMPPSPQHPHTP.

It belongs to the peptidase S8 family.

The protein resides in the secreted. In terms of biological role, secreted subtilisin-like serine protease with keratinolytic activity that contributes to pathogenicity. This chain is Subtilisin-like protease 1 (SUB1), found in Trichophyton tonsurans (Scalp ringworm fungus).